The chain runs to 313 residues: Small ribosomal subunit biogenesis GTPase RsgA (313 aa).

Residues 82 to 235 (REKLIAANAT…IIDSPGIQQF (154 aa)) enclose the CP-type G domain. GTP is bound by residues 127-130 (NKTD) and 177-185 (GQSGMGKST). Residues cysteine 259, cysteine 264, histidine 266, and cysteine 272 each contribute to the Zn(2+) site.

Belongs to the TRAFAC class YlqF/YawG GTPase family. RsgA subfamily. As to quaternary structure, monomer. Associates with 30S ribosomal subunit, binds 16S rRNA. Requires Zn(2+) as cofactor.

It localises to the cytoplasm. In terms of biological role, one of several proteins that assist in the late maturation steps of the functional core of the 30S ribosomal subunit. Helps release RbfA from mature subunits. May play a role in the assembly of ribosomal proteins into the subunit. Circularly permuted GTPase that catalyzes slow GTP hydrolysis, GTPase activity is stimulated by the 30S ribosomal subunit. This is Small ribosomal subunit biogenesis GTPase RsgA from Nitrosospira multiformis (strain ATCC 25196 / NCIMB 11849 / C 71).